The chain runs to 469 residues: Diaminopimelate decarboxylase (469 aa).

The disordered stretch occupies residues 1–23 (MLSTEMPLPTTGSTLLKTPASPS). K93 is modified (N6-(pyridoxal phosphate)lysine). Residues G279 and 321–324 (EPGR) contribute to the pyridoxal 5'-phosphate site. Positions 324, 361, and 365 each coordinate substrate. The active-site Proton donor is the C392. 2 residues coordinate substrate: E393 and Y421. Y421 contacts pyridoxal 5'-phosphate.

The protein belongs to the Orn/Lys/Arg decarboxylase class-II family. LysA subfamily. In terms of assembly, homodimer. The cofactor is pyridoxal 5'-phosphate.

It carries out the reaction meso-2,6-diaminopimelate + H(+) = L-lysine + CO2. Its pathway is amino-acid biosynthesis; L-lysine biosynthesis via DAP pathway; L-lysine from DL-2,6-diaminopimelate: step 1/1. In terms of biological role, specifically catalyzes the decarboxylation of meso-diaminopimelate (meso-DAP) to L-lysine. This is Diaminopimelate decarboxylase from Synechocystis sp. (strain ATCC 27184 / PCC 6803 / Kazusa).